The sequence spans 1017 residues: A-type ATP synthase subunit A (1017 aa).

One can recognise a DOD-type homing endonuclease domain in the interval 396-529 (FLGYLIADGT…FSYLLAKLGI (134 aa)).

It belongs to the ATPase alpha/beta chains family. As to quaternary structure, has multiple subunits with at least A(3), B(3), C, D, E, F, H, I and proteolipid K(x). This protein undergoes a protein self splicing that involves a post-translational excision of the VDE intervening region (intein) followed by peptide ligation.

The protein resides in the cell membrane. The enzyme catalyses ATP + H2O + 4 H(+)(in) = ADP + phosphate + 5 H(+)(out). Component of the A-type ATP synthase that produces ATP from ADP in the presence of a proton gradient across the membrane. The A chain is the catalytic subunit. This chain is A-type ATP synthase subunit A, found in Pyrococcus abyssi (strain GE5 / Orsay).